The chain runs to 164 residues: Large ribosomal subunit protein bL9 (164 aa).

This sequence belongs to the bacterial ribosomal protein bL9 family.

Functionally, binds to the 23S rRNA. This Psychrobacter sp. (strain PRwf-1) protein is Large ribosomal subunit protein bL9.